The following is a 650-amino-acid chain: Chaperone protein DnaK (650 aa).

Threonine 200 carries the post-translational modification Phosphothreonine; by autocatalysis. Residues 611–636 (AQQAGAAGAAGAAAEGASAQGGAQPA) show a composition bias toward low complexity. Positions 611–650 (AQQAGAAGAAGAAAEGASAQGGAQPADDVVDADFKEVKKD) are disordered.

The protein belongs to the heat shock protein 70 family.

In terms of biological role, acts as a chaperone. This chain is Chaperone protein DnaK, found in Burkholderia mallei (strain NCTC 10247).